The chain runs to 192 residues: Glycerol-3-phosphate acyltransferase (192 aa).

Helical transmembrane passes span 3–23, 51–71, 80–100, 112–132, and 149–169; these read ALFL…EVIA, YGVL…LIAV, VLTF…FFGF, VVFA…LGIF, and AFLF…AIVI.

It belongs to the PlsY family. In terms of assembly, probably interacts with PlsX.

The protein resides in the cell inner membrane. The catalysed reaction is an acyl phosphate + sn-glycerol 3-phosphate = a 1-acyl-sn-glycero-3-phosphate + phosphate. It functions in the pathway lipid metabolism; phospholipid metabolism. Catalyzes the transfer of an acyl group from acyl-phosphate (acyl-PO(4)) to glycerol-3-phosphate (G3P) to form lysophosphatidic acid (LPA). This enzyme utilizes acyl-phosphate as fatty acyl donor, but not acyl-CoA or acyl-ACP. This Aquifex aeolicus (strain VF5) protein is Glycerol-3-phosphate acyltransferase.